Reading from the N-terminus, the 357-residue chain is Peptide chain release factor 1 (357 aa).

Position 234 is an N5-methylglutamine (glutamine 234). Residues 284-307 show a composition bias toward basic and acidic residues; it reads KKQEQRSNDRKQQVGSGDRSERIR. Residues 284 to 313 are disordered; that stretch reads KKQEQRSNDRKQQVGSGDRSERIRTYNFPQ.

It belongs to the prokaryotic/mitochondrial release factor family. In terms of processing, methylated by PrmC. Methylation increases the termination efficiency of RF1.

It localises to the cytoplasm. Peptide chain release factor 1 directs the termination of translation in response to the peptide chain termination codons UAG and UAA. The sequence is that of Peptide chain release factor 1 from Borrelia hermsii (strain HS1 / DAH).